A 270-amino-acid chain; its full sequence is Interleukin-1 beta (270 aa).

The propeptide occupies 1-118 (MATVPEPTSE…VYDDDAFVCD (118 aa)).

Belongs to the IL-1 family. Monomer. In its precursor form, weakly interacts with full-length MEFV; the mature cytokine does not interact at all. Interacts with integrins ITGAV:ITGBV and ITGA5:ITGB1; integrin-binding is required for IL1B signaling. Interacts with cargo receptor TMED10; the interaction is direct and is required for the secretion of IL1B mature form. Interacts with HSP90AB1; the interaction facilitates cargo translocation into the ERGIC. Interacts with HSP90B1; the interaction facilitates cargo translocation into the ERGIC.

The protein resides in the cytoplasm. The protein localises to the cytosol. It localises to the secreted. It is found in the lysosome. Its subcellular location is the extracellular exosome. In terms of biological role, potent pro-inflammatory cytokine. Initially discovered as the major endogenous pyrogen, induces prostaglandin synthesis, neutrophil influx and activation, T-cell activation and cytokine production, B-cell activation and antibody production, and fibroblast proliferation and collagen production. Promotes Th17 differentiation of T-cells. Synergizes with IL12/interleukin-12 to induce IFNG synthesis from T-helper 1 (Th1) cells. Plays a role in angiogenesis by inducing VEGF production synergistically with TNF and IL6. Involved in transduction of inflammation downstream of pyroptosis: its mature form is specifically released in the extracellular milieu by passing through the gasdermin-D (GSDMD) pore. The protein is Interleukin-1 beta (IL1B) of Phoca vitulina richardii (Pacific harbor seal).